A 149-amino-acid polypeptide reads, in one-letter code: Calmodulin (149 aa).

Residue Ala-2 is modified to N-acetylalanine. 4 consecutive EF-hand domains span residues 8 to 43 (EQIA…LGQN), 44 to 79 (PTEA…KMKD), 81 to 116 (DSEE…LGEK), and 117 to 149 (LSED…MMSK). Ca(2+) is bound by residues Asp-21, Asp-23, Asp-25, Thr-27, Glu-32, Asp-57, Asp-59, Asn-61, Thr-63, Glu-68, Asp-94, Asp-96, Asn-98, Tyr-100, Glu-105, Asp-130, Asp-132, Asp-134, Gln-136, and Glu-141.

Belongs to the calmodulin family.

In terms of biological role, calmodulin mediates the control of a large number of enzymes, ion channels and other proteins by Ca(2+). Among the enzymes to be stimulated by the calmodulin-Ca(2+) complex are a number of protein kinases and phosphatases. The chain is Calmodulin (CMD1) from Blastocladiella emersonii (Aquatic fungus).